The chain runs to 194 residues: Phosphoheptose isomerase (194 aa).

In terms of domain architecture, SIS spans isoleucine 37–glycine 194. Asparagine 52–glycine 54 contacts substrate. Residues histidine 61 and glutamate 65 each coordinate Zn(2+). Substrate contacts are provided by residues glutamate 65, asparagine 93–aspartate 94, serine 119–serine 121, serine 124, and glutamine 172. Positions 172 and 180 each coordinate Zn(2+).

The protein belongs to the SIS family. GmhA subfamily. As to quaternary structure, homotetramer. Zn(2+) is required as a cofactor.

It is found in the cytoplasm. It carries out the reaction 2 D-sedoheptulose 7-phosphate = D-glycero-alpha-D-manno-heptose 7-phosphate + D-glycero-beta-D-manno-heptose 7-phosphate. It functions in the pathway carbohydrate biosynthesis; D-glycero-D-manno-heptose 7-phosphate biosynthesis; D-glycero-alpha-D-manno-heptose 7-phosphate and D-glycero-beta-D-manno-heptose 7-phosphate from sedoheptulose 7-phosphate: step 1/1. Its function is as follows. Catalyzes the isomerization of sedoheptulose 7-phosphate in D-glycero-D-manno-heptose 7-phosphate. In Sodalis glossinidius (strain morsitans), this protein is Phosphoheptose isomerase.